Here is a 732-residue protein sequence, read N- to C-terminus: Acetophenone carboxylase gamma subunit (732 aa).

It belongs to the HyuA family. In terms of assembly, acetophenone carboxylase consists of five subunits; a heterooctameric subcomplex of two alpha (Apc1), two beta (Apc2), two gamma (Apc3) and two delta (Apc4) subunits assembles with the epsilon (Apc5) subunit in an unknown stoichiometry. The cofactor is Mg(2+). It depends on Mn(2+) as a cofactor.

The protein localises to the cytoplasm. The catalysed reaction is acetophenone + hydrogencarbonate + 2 ATP + H2O = 3-oxo-3-phenylpropanoate + 2 ADP + 2 phosphate + 2 H(+). With respect to regulation, inhibited by zinc ions, carbamoylphosphate and beta,gamma-imido-ATP. Catalyzes the carboxylation of acetophenone to form 3-oxo-3-phenylpropanoate (benzoylacetate) in the anaerobic catabolism of ethylbenzene. Also carboxylates propiophenone at the same rate and 4-acetyl-pyridine at lower rates. The chain is Acetophenone carboxylase gamma subunit (apc3) from Aromatoleum aromaticum (strain DSM 19018 / LMG 30748 / EbN1) (Azoarcus sp. (strain EbN1)).